The sequence spans 322 residues: Putative T-box protein 11 (322 aa).

A DNA-binding region (T-box) is located at residues 16–185 (LWRSCHEYDN…NNPYSTGSRK (170 aa)). Over residues 171–182 (TLKTNNNPYSTG) the composition is skewed to polar residues. The tract at residues 171–214 (TLKTNNNPYSTGSRKDRRRERQSPVYSEGTSSEKSISPPPAKKI) is disordered.

The protein localises to the nucleus. This is Putative T-box protein 11 (tbx-11) from Caenorhabditis elegans.